The chain runs to 56 residues: Large ribosomal subunit protein eL40 (56 aa).

The protein belongs to the eukaryotic ribosomal protein eL40 family.

This Saccharolobus islandicus (strain Y.N.15.51 / Yellowstone #2) (Sulfolobus islandicus) protein is Large ribosomal subunit protein eL40.